The following is a 120-amino-acid chain: NAD(P)H-quinone oxidoreductase subunit 3, chloroplastic (120 aa).

3 helical membrane passes run 9-29 (IFWA…LISG), 64-84 (MFAL…PWAM), and 88-108 (VLGV…IVGL).

It belongs to the complex I subunit 3 family. As to quaternary structure, NDH is composed of at least 16 different subunits, 5 of which are encoded in the nucleus.

Its subcellular location is the plastid. It localises to the chloroplast thylakoid membrane. The enzyme catalyses a plastoquinone + NADH + (n+1) H(+)(in) = a plastoquinol + NAD(+) + n H(+)(out). It carries out the reaction a plastoquinone + NADPH + (n+1) H(+)(in) = a plastoquinol + NADP(+) + n H(+)(out). NDH shuttles electrons from NAD(P)H:plastoquinone, via FMN and iron-sulfur (Fe-S) centers, to quinones in the photosynthetic chain and possibly in a chloroplast respiratory chain. The immediate electron acceptor for the enzyme in this species is believed to be plastoquinone. Couples the redox reaction to proton translocation, and thus conserves the redox energy in a proton gradient. In Lupinus luteus (European yellow lupine), this protein is NAD(P)H-quinone oxidoreductase subunit 3, chloroplastic.